A 97-amino-acid chain; its full sequence is MGKGGGYVTVAAEEVEELRRRNGELEREMEEMKKEMVQLWRRTVVAEEAEERLCSQLAELEVESLDQARDYHSRIVFLMDQISRLSSSSLEVVVTNS.

A coiled-coil region spans residues 8 to 42 (VTVAAEEVEELRRRNGELEREMEEMKKEMVQLWRR).

This is Protein RESPONSE TO LOW SULFUR 3 from Arabidopsis thaliana (Mouse-ear cress).